The primary structure comprises 325 residues: Myo-inositol dehydrogenase Hyg17 (325 aa).

The protein belongs to the Gfo/Idh/MocA family.

It catalyses the reaction myo-inositol + NAD(+) = myo-inosose-5 + NADH + H(+). It participates in antibiotic biosynthesis. Functionally, dehydrogenase involved in the biosynthesis of the aminocyclitol moiety of hygromycin A, a broad-spectrum antibiotic. Catalyzes the NAD(+)-dependent oxidation of myo-inositol to myo-inosose-5 (neo-inosose). Shows reduced activity with scyllo-inositol, minimal activity with L-chiro-inositol and no activity with D-glucose, D-chiro-inositol, epi-inositol, muco-inositol and allo-inositol. Is specific for NAD(+) and cannot use NADP(+). This chain is Myo-inositol dehydrogenase Hyg17, found in Streptomyces leeuwenhoekii.